The sequence spans 233 residues: Adenosine 5'-phosphosulfate reductase 1 (233 aa).

[4Fe-4S] cluster-binding residues include Cys120, Cys121, Cys203, and Cys206. The active-site Nucleophile; cysteine thiosulfonate intermediate is Cys229.

It belongs to the PAPS reductase family. CysH subfamily. The cofactor is [4Fe-4S] cluster.

It localises to the cytoplasm. It catalyses the reaction [thioredoxin]-disulfide + sulfite + AMP + 2 H(+) = adenosine 5'-phosphosulfate + [thioredoxin]-dithiol. It functions in the pathway sulfur metabolism; hydrogen sulfide biosynthesis; sulfite from sulfate. Catalyzes the formation of sulfite from adenosine 5'-phosphosulfate (APS) using thioredoxin as an electron donor. The sequence is that of Adenosine 5'-phosphosulfate reductase 1 (cysH) from Bacillus subtilis (strain 168).